The sequence spans 1587 residues: Pentafunctional AROM polypeptide (1587 aa).

The segment at 1–384 is 3-dehydroquinate synthase; it reads MIEPTKISIL…YEPRASVVAN (384 aa). NAD(+) contacts are provided by residues 44–46, 81–84, 114–116, and aspartate 119; these read DTN, EVSK, and GGV. Arginine 130 is a binding site for 7-phospho-2-dehydro-3-deoxy-D-arabino-heptonate. 139–140 lines the NAD(+) pocket; it reads TT. Residues aspartate 146 and lysine 152 each contribute to the 7-phospho-2-dehydro-3-deoxy-D-arabino-heptonate site. NAD(+) is bound at residue lysine 161. 7-phospho-2-dehydro-3-deoxy-D-arabino-heptonate is bound at residue asparagine 162. Residues 179-182 and asparagine 190 each bind NAD(+); that span reads FLET. Glutamate 194 serves as a coordination point for Zn(2+). 7-phospho-2-dehydro-3-deoxy-D-arabino-heptonate is bound by residues 194 to 197 and lysine 250; that span reads EVIK. Glutamate 260 acts as the Proton acceptor; for 3-dehydroquinate synthase activity in catalysis. 7-phospho-2-dehydro-3-deoxy-D-arabino-heptonate is bound by residues 264 to 268 and histidine 271; that span reads RNLLN. Histidine 271 is a Zn(2+) binding site. The active-site Proton acceptor; for 3-dehydroquinate synthase activity is histidine 275. 7-phospho-2-dehydro-3-deoxy-D-arabino-heptonate-binding residues include histidine 287 and lysine 356. Residue histidine 287 participates in Zn(2+) binding. The segment at 397–842 is EPSP synthase; the sequence is VFPGVSPKST…WDTLRLKFAV (446 aa). Cysteine 824 functions as the For EPSP synthase activity in the catalytic mechanism. Residues 864–1055 form a shikimate kinase region; that stretch reads SASVFIIGMR…KKKQHSFFVS (192 aa). 871–878 contacts ATP; it reads GMRGAGKT. The tract at residues 1056-1276 is 3-dehydroquinase; sequence LTLPDLRPAG…AAPGQLSATE (221 aa). The Proton acceptor; for 3-dehydroquinate dehydratase activity role is filled by histidine 1179. Lysine 1207 functions as the Schiff-base intermediate with substrate; for 3-dehydroquinate dehydratase activity in the catalytic mechanism. The interval 1289–1587 is shikimate dehydrogenase; sequence KKRFALFGTP…RDAVLGTKAD (299 aa).

In the N-terminal section; belongs to the sugar phosphate cyclases superfamily. Dehydroquinate synthase family. It in the 2nd section; belongs to the EPSP synthase family. This sequence in the 3rd section; belongs to the shikimate kinase family. The protein in the 4th section; belongs to the type-I 3-dehydroquinase family. In the C-terminal section; belongs to the shikimate dehydrogenase family. In terms of assembly, homodimer. Requires Zn(2+) as cofactor.

The protein resides in the cytoplasm. The enzyme catalyses 7-phospho-2-dehydro-3-deoxy-D-arabino-heptonate = 3-dehydroquinate + phosphate. The catalysed reaction is 3-dehydroquinate = 3-dehydroshikimate + H2O. It carries out the reaction shikimate + NADP(+) = 3-dehydroshikimate + NADPH + H(+). It catalyses the reaction shikimate + ATP = 3-phosphoshikimate + ADP + H(+). The enzyme catalyses 3-phosphoshikimate + phosphoenolpyruvate = 5-O-(1-carboxyvinyl)-3-phosphoshikimate + phosphate. The protein operates within metabolic intermediate biosynthesis; chorismate biosynthesis; chorismate from D-erythrose 4-phosphate and phosphoenolpyruvate: step 2/7. Its pathway is metabolic intermediate biosynthesis; chorismate biosynthesis; chorismate from D-erythrose 4-phosphate and phosphoenolpyruvate: step 3/7. It functions in the pathway metabolic intermediate biosynthesis; chorismate biosynthesis; chorismate from D-erythrose 4-phosphate and phosphoenolpyruvate: step 4/7. It participates in metabolic intermediate biosynthesis; chorismate biosynthesis; chorismate from D-erythrose 4-phosphate and phosphoenolpyruvate: step 5/7. The protein operates within metabolic intermediate biosynthesis; chorismate biosynthesis; chorismate from D-erythrose 4-phosphate and phosphoenolpyruvate: step 6/7. Functionally, the AROM polypeptide catalyzes 5 consecutive enzymatic reactions in prechorismate polyaromatic amino acid biosynthesis. The sequence is that of Pentafunctional AROM polypeptide from Aspergillus clavatus (strain ATCC 1007 / CBS 513.65 / DSM 816 / NCTC 3887 / NRRL 1 / QM 1276 / 107).